The following is a 226-amino-acid chain: 7-cyano-7-deazaguanine synthase (226 aa).

Residue 10 to 20 (LSGGLDSATAA) coordinates ATP. Residues cysteine 191, cysteine 199, cysteine 202, and cysteine 205 each contribute to the Zn(2+) site.

It belongs to the QueC family. Zn(2+) serves as cofactor.

It catalyses the reaction 7-carboxy-7-deazaguanine + NH4(+) + ATP = 7-cyano-7-deazaguanine + ADP + phosphate + H2O + H(+). It functions in the pathway purine metabolism; 7-cyano-7-deazaguanine biosynthesis. Its function is as follows. Catalyzes the ATP-dependent conversion of 7-carboxy-7-deazaguanine (CDG) to 7-cyano-7-deazaguanine (preQ(0)). The sequence is that of 7-cyano-7-deazaguanine synthase from Prochlorococcus marinus (strain MIT 9303).